Here is a 305-residue protein sequence, read N- to C-terminus: Ribosomal RNA small subunit methyltransferase H (305 aa).

S-adenosyl-L-methionine contacts are provided by residues 30–32, D49, F74, D96, and Q103; that span reads GGH.

This sequence belongs to the methyltransferase superfamily. RsmH family.

The protein resides in the cytoplasm. The catalysed reaction is cytidine(1402) in 16S rRNA + S-adenosyl-L-methionine = N(4)-methylcytidine(1402) in 16S rRNA + S-adenosyl-L-homocysteine + H(+). Its function is as follows. Specifically methylates the N4 position of cytidine in position 1402 (C1402) of 16S rRNA. The sequence is that of Ribosomal RNA small subunit methyltransferase H from Francisella tularensis subsp. tularensis (strain FSC 198).